The chain runs to 287 residues: 4-hydroxybenzoate octaprenyltransferase (287 aa).

Transmembrane regions (helical) follow at residues 20 to 40 (IGSL…ADGL), 43 to 63 (MHVL…GCVI), 94 to 114 (LGLF…MNTL), 115 to 135 (TIML…MKRY), 137 to 157 (HLPQ…AYAA), 159 to 179 (AGEL…WTIA), 210 to 230 (IIIG…GHSL), 235 to 255 (IYYW…RLIG), and 266 to 286 (FLNN…SVMM).

The protein belongs to the UbiA prenyltransferase family. Requires Mg(2+) as cofactor.

The protein localises to the cell inner membrane. It catalyses the reaction all-trans-octaprenyl diphosphate + 4-hydroxybenzoate = 4-hydroxy-3-(all-trans-octaprenyl)benzoate + diphosphate. It functions in the pathway cofactor biosynthesis; ubiquinone biosynthesis. Functionally, catalyzes the prenylation of para-hydroxybenzoate (PHB) with an all-trans polyprenyl group. Mediates the second step in the final reaction sequence of ubiquinone-8 (UQ-8) biosynthesis, which is the condensation of the polyisoprenoid side chain with PHB, generating the first membrane-bound Q intermediate 3-octaprenyl-4-hydroxybenzoate. This Photobacterium profundum (strain SS9) protein is 4-hydroxybenzoate octaprenyltransferase.